A 697-amino-acid chain; its full sequence is Elongation factor G (697 aa).

Residues 10 to 285 enclose the tr-type G domain; that stretch reads AKTRNIGIMA…GVIDYLPSPL (276 aa). GTP is bound by residues 19-26, 83-87, and 137-140; these read AHIDAGKT, DTPGH, and NKMD.

The protein belongs to the TRAFAC class translation factor GTPase superfamily. Classic translation factor GTPase family. EF-G/EF-2 subfamily.

It is found in the cytoplasm. Catalyzes the GTP-dependent ribosomal translocation step during translation elongation. During this step, the ribosome changes from the pre-translocational (PRE) to the post-translocational (POST) state as the newly formed A-site-bound peptidyl-tRNA and P-site-bound deacylated tRNA move to the P and E sites, respectively. Catalyzes the coordinated movement of the two tRNA molecules, the mRNA and conformational changes in the ribosome. This chain is Elongation factor G, found in Lactobacillus acidophilus (strain ATCC 700396 / NCK56 / N2 / NCFM).